Reading from the N-terminus, the 92-residue chain is Acylphosphatase (92 aa).

The Acylphosphatase-like domain maps to 5–92; it reads CIAAYVYGVV…TPFETFKIRY (88 aa). Catalysis depends on residues R20 and N38.

The protein belongs to the acylphosphatase family.

It carries out the reaction an acyl phosphate + H2O = a carboxylate + phosphate + H(+). This Yersinia enterocolitica serotype O:8 / biotype 1B (strain NCTC 13174 / 8081) protein is Acylphosphatase (acyP).